The chain runs to 119 residues: Basic phospholipase A2 (119 aa).

Cystine bridges form between Cys11–Cys72, Cys27–Cys118, Cys29–Cys45, Cys44–Cys100, Cys51–Cys93, Cys61–Cys86, and Cys79–Cys91. Residues Tyr28, Gly30, and Gly32 each coordinate Ca(2+). The active site involves His48. Asp49 is a Ca(2+) binding site. A glycan (N-linked (GlcNAc...) asparagine) is linked at Asn82. Asp94 is an active-site residue.

It belongs to the phospholipase A2 family. Group I subfamily. D49 sub-subfamily. The cofactor is Ca(2+). In terms of tissue distribution, expressed by the venom gland.

It localises to the secreted. It carries out the reaction a 1,2-diacyl-sn-glycero-3-phosphocholine + H2O = a 1-acyl-sn-glycero-3-phosphocholine + a fatty acid + H(+). In terms of biological role, snake venom phospholipase A2 (PLA2) that shows weak myotoxicity and induces edema in mice. Shows no cytotoxicity in vitro. Has an anticoagulant effect in vitro. PLA2 catalyzes the calcium-dependent hydrolysis of the 2-acyl groups in 3-sn-phosphoglycerides. In Micrurus mipartitus (Red-tailed coral snake), this protein is Basic phospholipase A2.